Consider the following 316-residue polypeptide: Melanocyte-stimulating hormone receptor (316 aa).

Residues 1-37 (MPMQGAQRKLLGSLNSTPTATSNLGLAANHTGAPCLE) are Extracellular-facing. Residue asparagine 29 is glycosylated (N-linked (GlcNAc...) asparagine). A helical membrane pass occupies residues 38–63 (VSIPDGLFLSLGLVSLVENMLVVAAI). The Cytoplasmic segment spans residues 64-72 (AKNRNLHSP). Residues 73–93 (MYCFICCLALSDLLVSGSNML) traverse the membrane as a helical segment. Residues 94 to 118 (ETAVVVLLEAGALATRASVVQQLHN) lie on the Extracellular side of the membrane. The helical transmembrane segment at 119–140 (TIDVLTYSSMLCSLCFVGAIAV) threads the bilayer. Topologically, residues 141–163 (DRYISIFYALRYHSIMTLPRVQR) are cytoplasmic. A helical membrane pass occupies residues 164-183 (VIAAIWVASVTSSTLFITYY). The Extracellular segment spans residues 184 to 191 (EHVVALLC). The helical transmembrane segment at 192-210 (LVVFLTMLVLMAVLYVHML) threads the bilayer. The Cytoplasmic portion of the chain corresponds to 211 to 239 (ARACQHAQGITRLHKRQPPAHQGFGLRGA). The helical transmembrane segment at 240–265 (ATLTILLGIFFLCWGPFFLHLTLVVF) threads the bilayer. Residues 266 to 278 (CPQHLTCSCIFKN) lie on the Extracellular side of the membrane. A helical transmembrane segment spans residues 279 to 299 (FKVFLTLIICNTIIDPLIYAF). Topologically, residues 300–316 (RSQELCRTLKEVLLCSW) are cytoplasmic. A lipid anchor (S-palmitoyl cysteine) is attached at cysteine 314.

Belongs to the G-protein coupled receptor 1 family. In terms of assembly, interacts with MGRN1, but does not undergo MGRN1-mediated ubiquitination; this interaction competes with GNAS-binding and thus inhibits agonist-induced cAMP production. Interacts with OPN3; the interaction results in a decrease in MC1R-mediated cAMP signaling and ultimately a decrease in melanin production in melanocytes.

It is found in the cell membrane. Functionally, receptor for MSH (alpha, beta and gamma) and ACTH. The activity of this receptor is mediated by G proteins which activate adenylate cyclase. Mediates melanogenesis, the production of eumelanin (black/brown) and phaeomelanin (red/yellow), via regulation of cAMP signaling in melanocytes. The chain is Melanocyte-stimulating hormone receptor (MC1R) from Cebus albifrons (White-fronted capuchin).